The sequence spans 440 residues: 3-phosphoshikimate 1-carboxyvinyltransferase (440 aa).

3-phosphoshikimate-binding residues include Lys29 and Arg34. Residue Lys29 participates in phosphoenolpyruvate binding. The phosphoenolpyruvate site is built by Gly99 and Arg128. 3-phosphoshikimate contacts are provided by Ser171, Ser172, Gln173, Ser199, Asp316, and Lys343. Position 173 (Gln173) interacts with phosphoenolpyruvate. Asp316 functions as the Proton acceptor in the catalytic mechanism. Residues Arg347, Arg390, and Lys416 each contribute to the phosphoenolpyruvate site.

This sequence belongs to the EPSP synthase family. As to quaternary structure, monomer.

The protein resides in the cytoplasm. The enzyme catalyses 3-phosphoshikimate + phosphoenolpyruvate = 5-O-(1-carboxyvinyl)-3-phosphoshikimate + phosphate. It participates in metabolic intermediate biosynthesis; chorismate biosynthesis; chorismate from D-erythrose 4-phosphate and phosphoenolpyruvate: step 6/7. Its function is as follows. Catalyzes the transfer of the enolpyruvyl moiety of phosphoenolpyruvate (PEP) to the 5-hydroxyl of shikimate-3-phosphate (S3P) to produce enolpyruvyl shikimate-3-phosphate and inorganic phosphate. This Deinococcus geothermalis (strain DSM 11300 / CIP 105573 / AG-3a) protein is 3-phosphoshikimate 1-carboxyvinyltransferase.